A 290-amino-acid chain; its full sequence is ATP synthase subunit a (290 aa).

The next 7 membrane-spanning stretches (helical) occupy residues 54-74 (AVHL…ILLF), 115-135 (IAPL…LKWI), 136-156 (PVDY…KIVP), 164-184 (FGLS…VKGF), 201-221 (LVPF…LSLA), 233-253 (VVFI…NVPW), and 254-274 (AIFH…LTVV).

It belongs to the ATPase A chain family. F-type ATPases have 2 components, CF(1) - the catalytic core - and CF(0) - the membrane proton channel. CF(1) has five subunits: alpha(3), beta(3), gamma(1), delta(1), epsilon(1). CF(0) has three main subunits: a(1), b(2) and c(9-12). The alpha and beta chains form an alternating ring which encloses part of the gamma chain. CF(1) is attached to CF(0) by a central stalk formed by the gamma and epsilon chains, while a peripheral stalk is formed by the delta and b chains.

It localises to the cell inner membrane. Functionally, key component of the proton channel; it plays a direct role in the translocation of protons across the membrane. The polypeptide is ATP synthase subunit a (Stutzerimonas stutzeri (strain A1501) (Pseudomonas stutzeri)).